The chain runs to 249 residues: Triosephosphate isomerase (249 aa).

Residues N12 and K14 each coordinate substrate. Residue K14 is modified to N6-acetyllysine. Y68 is modified (3'-nitrotyrosine). S80 is subject to Phosphoserine. H96 (electrophile) is an active-site residue. S106 is modified (phosphoserine). A Glycyl lysine isopeptide (Lys-Gly) (interchain with G-Cter in SUMO1) cross-link involves residue K142. K149 bears the N6-succinyllysine mark. Position 156 is an N6-acetyllysine; alternate (K156). The residue at position 156 (K156) is an N6-succinyllysine; alternate. Position 159 is a phosphoserine (S159). The Proton acceptor role is filled by E166. The residue at position 173 (T173) is a Phosphothreonine. K194 is modified (N6-acetyllysine; alternate). An N6-succinyllysine; alternate modification is found at K194. K194 is subject to N6-methyllysine; alternate. S198 bears the Phosphoserine mark. Residue Y209 is modified to 3'-nitrotyrosine. Position 212 is a phosphoserine (S212). T214 carries the post-translational modification Phosphothreonine. The residue at position 223 (S223) is a Phosphoserine. N6-acetyllysine is present on K238.

This sequence belongs to the triosephosphate isomerase family. In terms of assembly, homodimer.

It is found in the cytoplasm. The catalysed reaction is dihydroxyacetone phosphate = methylglyoxal + phosphate. The enzyme catalyses D-glyceraldehyde 3-phosphate = dihydroxyacetone phosphate. It participates in carbohydrate degradation; glycolysis; D-glyceraldehyde 3-phosphate from glycerone phosphate: step 1/1. Its pathway is carbohydrate biosynthesis; gluconeogenesis. In terms of biological role, triosephosphate isomerase is an extremely efficient metabolic enzyme that catalyzes the interconversion between dihydroxyacetone phosphate (DHAP) and D-glyceraldehyde-3-phosphate (G3P) in glycolysis and gluconeogenesis. Its function is as follows. It is also responsible for the non-negligible production of methylglyoxal a reactive cytotoxic side-product that modifies and can alter proteins, DNA and lipids. In Pongo abelii (Sumatran orangutan), this protein is Triosephosphate isomerase (TPI1).